The following is a 98-amino-acid chain: Large ribosomal subunit protein uL23 (98 aa).

It belongs to the universal ribosomal protein uL23 family. As to quaternary structure, part of the 50S ribosomal subunit. Contacts protein L29, and trigger factor when it is bound to the ribosome.

One of the early assembly proteins it binds 23S rRNA. One of the proteins that surrounds the polypeptide exit tunnel on the outside of the ribosome. Forms the main docking site for trigger factor binding to the ribosome. The protein is Large ribosomal subunit protein uL23 of Koribacter versatilis (strain Ellin345).